Here is a 178-residue protein sequence, read N- to C-terminus: Large ribosomal subunit protein uL5 (178 aa).

The protein belongs to the universal ribosomal protein uL5 family. In terms of assembly, part of the 50S ribosomal subunit; part of the 5S rRNA/L5/L18/L25 subcomplex. Contacts the 5S rRNA and the P site tRNA. Forms a bridge to the 30S subunit in the 70S ribosome.

Functionally, this is one of the proteins that bind and probably mediate the attachment of the 5S RNA into the large ribosomal subunit, where it forms part of the central protuberance. In the 70S ribosome it contacts protein S13 of the 30S subunit (bridge B1b), connecting the 2 subunits; this bridge is implicated in subunit movement. Contacts the P site tRNA; the 5S rRNA and some of its associated proteins might help stabilize positioning of ribosome-bound tRNAs. The polypeptide is Large ribosomal subunit protein uL5 (Wigglesworthia glossinidia brevipalpis).